The chain runs to 1262 residues: MTSGSELKAEVDAPVVNGKDELVHEEDNNDSGHSSINTPDASEDKQTDKLVKVTIQPSCGEAFDLHLSDNELVQELYQTLLDREATCHRTCFSLYLNGTAVDNYSEVRSVPGFIDGCTLNVVDEPYTVRDARLHLRQVRELLRFGLVQDQHEPPCGNEAQSYLASIDLNPSEKKESKQSDILPPDYVLPGCKERSLAHLVVPQQKELIAVKDIAFSPFNPPPGPRKLRGDVLYIDVTTVENRVYHLTCCTRGFYVNNSQEQKFDPTISNANKTIYQSVIELLQNVSPGFKKVYPQILKRRVEKSLVERLPTSYPVSTWVASPLKPDNYSSDSLRAIELIEPFRVGFEDHMPGLLRDWNEELQTTFEMPRKSLAERAVRDRSYYKIHADYVNAAAKGVQSILDGNILAINPGEDKKTHMYIWNNIFFSLGFDVRDHYKELGGDAAAFAATSTDLQGVRAFATLEDPKLNTLGMAIFDYRGYRVTAQSIIPGILEREQEQSVVYGSIDFGKTVVSDEKYHALLEDAAQQLKMLPHNVISVKDGVEQELKLFTSYEAKGIVGNDGRKYVLDLLRSMPPDVHYLEDAEVSETAKDLGYPRKFPHKLSALRRELVDQFCESRLVMFIQSTARKIRALITEAKEKNDEELIKQAAEAESELSLVFVAVSEDREIETKNKIVQDAIKEACAEIHSIYEDRFVIKFNPDCFSPNVKHAPSENLERQRRVVIDAAEYLLTNQIPEIVQSFKDCTVQPIDGNNLADILHSKGINIRYLGEIGKRVQDTNSFARPLVLSDIVARSAKHVIRKINVQTPVDQLVVSTSHILNCLFSTVSEPSPVASHAHKKSSKKNGKKKNSGVWATLTTASLWKSICEESAYYYGYHIDTETLDKFLEQHEIQKTALFRRVVKIMGVQIVARDYQLDSSAKKVAAFTEDDIINFYPIIKHHQPFTVDAKKMIIRGQHAMSLGASREAYECISEAINIMTAVYGVMHPDMPQCLRALARLGHVLGETPDALNHQHKATVMSERLIGLDSGNTIIEYNSLIHYLLICFQINLAHFAFGALLIPGSLRPLYRARYLMNLVFGEKHPIMAQIDANIGTILFTIQEYDTALKYLQSADAISKAIGEPRKLKTGLISNLIARTHAARGDFRAALVAEKETSSIYTELYGKNHQRVKDSGEYLRTLTQQAVTFQKKMLNPDNNTNINELFQIQPPPISALFDILNIINGIMIIGIPGLSNLAALEKEQIGTAEESKATDVAAQLDNETLD.

Residues 1 to 47 (MTSGSELKAEVDAPVVNGKDELVHEEDNNDSGHSSINTPDASEDKQT) form a disordered region. Over residues 31 to 40 (SGHSSINTPD) the composition is skewed to polar residues. The Clu domain occupies 335 to 580 (AIELIEPFRV…RSMPPDVHYL (246 aa)).

The protein belongs to the CLU family.

The protein resides in the cytoplasm. Functionally, mRNA-binding protein involved in proper cytoplasmic distribution of mitochondria. The polypeptide is Clustered mitochondria protein homolog (Caenorhabditis briggsae).